Consider the following 359-residue polypeptide: 3-dehydroquinate synthase (359 aa).

NAD(+)-binding positions include Asp71–Lys76, Gly105–Asp109, Thr129–Thr130, Lys142, Lys151, and Cys169–Thr172. Zn(2+)-binding residues include Glu184, His247, and His264.

It belongs to the sugar phosphate cyclases superfamily. Dehydroquinate synthase family. Co(2+) is required as a cofactor. It depends on Zn(2+) as a cofactor. NAD(+) serves as cofactor.

Its subcellular location is the cytoplasm. It catalyses the reaction 7-phospho-2-dehydro-3-deoxy-D-arabino-heptonate = 3-dehydroquinate + phosphate. It functions in the pathway metabolic intermediate biosynthesis; chorismate biosynthesis; chorismate from D-erythrose 4-phosphate and phosphoenolpyruvate: step 2/7. Its function is as follows. Catalyzes the conversion of 3-deoxy-D-arabino-heptulosonate 7-phosphate (DAHP) to dehydroquinate (DHQ). The protein is 3-dehydroquinate synthase of Shewanella putrefaciens (strain CN-32 / ATCC BAA-453).